Consider the following 1249-residue polypeptide: Apoptotic protease-activating factor 1 (1249 aa).

In terms of domain architecture, CARD spans 1 to 90 (MDAKARNCLL…KDLAALLQSG (90 aa)). One can recognise an NB-ARC domain in the interval 106-415 (ITSFVRTVLC…LETEEVEDIL (310 aa)). ATP-binding positions include 154–161 (GMAGCGKS) and Arg265. One copy of the WD 1-1 repeat lies at 613–652 (PHTDAVYHACFSQDGQRIASCGADKTLQVFKAETGEKLLD). A WD 1-2 repeat occupies 655–694 (AHEDEVLCCAFSSDDSYIATCSADKKVKIWDSATGKLVHT). The stretch at 697–738 (EHSEQVNCCHFTNKSNHLLLATGSNDFFLKLWDLNQKECRNT) is one WD 1-3 repeat. The WD 1-4 repeat unit spans residues 741 to 780 (GHTNSVNHCRFSPDDELLASCSADGTLRLWDVRSANERKS). The stretch at 796-837 (DVEVIVKCCSWSADGDKIIVAAKNKVLLFDIHTSGLLAEIHT) is one WD 1-5 repeat. Residues 838–877 (GHHSTIQYCDFSPYDHLAVIALSQYCVELWNIDSRLKVAD) form a WD 1-6 repeat. The stretch at 880–910 (GHLSWVHGVMFSPDGSSFLTASDDQTIRVWE) is one WD 1-7 repeat. An interpropeller linker region spans residues 910 to 921 (ETKKVCKNSAIV). The stretch at 922–958 (LKQEIDVVFQENETMVLAVDNIRGLQLIAGKTGQIDY) is one WD 2-1 repeat. The stretch at 959–998 (LPEAQVSCCCLSPHLEYVAFGDEDGAIKIIELPNNRVFSS) is one WD 2-2 repeat. Residues 1001-1040 (GHKKAVRHIQFTADGKTLISSSEDSVIQVWNWQTGDYVFL) form a WD 2-3 repeat. The WD 2-4 repeat unit spans residues 1042-1080 (AHQETVKDFRLLQDSRLLSWSFDGTVKVWNVITGRIERD). The stretch at 1083 to 1122 (CHQGTVLSCAISSDATKFSSTSADKTAKIWSFDLLSPLHE) is one WD 2-5 repeat. The stretch at 1125-1164 (GHNGCVRCSAFSLDGILLATGDDNGEIRIWNVSDGQLLHS) is one WD 2-6 repeat. One copy of the WD 2-7 repeat lies at 1176-1213 (THGGWVTDVCFSPDSKTLVSAGGYLKWWNVATGDSSQT). The WD 2-8 repeat unit spans residues 1214 to 1249 (FYTNGTNLKKIHVSPDFRTYVTVDNLGILYILQVLE).

Monomer. Oligomerizes to a heptameric ring, known as the apoptosome, upon binding of cytochrome c and dATP. Oligomeric Apaf-1 and pro-caspase-9 bind to each other via their respective NH2-terminal CARD domains and consecutively mature caspase-9 is released from the complex. Interacts with UACA. It may also interact with Bcl-XL. Interacts with APIP. Interacts (via CARD and NACHT domains) with NAIP/BIRC1 (via NACHT domain). Interacts with CIAO2A. In terms of tissue distribution, highly expressed in lung and spleen, weakly in brain and kidney and not detectable in liver.

It localises to the cytoplasm. Functionally, oligomeric Apaf-1 mediates the cytochrome c-dependent autocatalytic activation of pro-caspase-9 (Apaf-3), leading to the activation of caspase-3 and apoptosis. This activation requires ATP. This chain is Apoptotic protease-activating factor 1 (Apaf1), found in Mus musculus (Mouse).